Reading from the N-terminus, the 144-residue chain is MKTFSPKPQDITRDWYVVDAEDKILGRLAAQIAHRLRGKHKPEFAPHVDNGDFIVVVNCEKIAVTGKKLSDKKYYRYSGYVGGLREQTLANVLATKPERALINAVKGMLPRNRLGRAMLKKLKVYAGSEHPHQAQNPQALELKY.

The protein belongs to the universal ribosomal protein uL13 family. As to quaternary structure, part of the 50S ribosomal subunit.

Its function is as follows. This protein is one of the early assembly proteins of the 50S ribosomal subunit, although it is not seen to bind rRNA by itself. It is important during the early stages of 50S assembly. The chain is Large ribosomal subunit protein uL13 from Oleidesulfovibrio alaskensis (strain ATCC BAA-1058 / DSM 17464 / G20) (Desulfovibrio alaskensis).